The sequence spans 183 residues: MVTQYIPLKEKYEKEVVPKLMKEFNYRNINQVPRIEKIVINMGIGEGSRNADLLNKHLKELAAITGQKPVITKAKKSISNFKIRKGMNVGLKVTLRGLRMWNFLYKIANIVLPKVRDFRGLNPNSFDGHGNYSFGLTEQFVFPEITPDQSPKTQGMDIVIVTTAKTDAEAFKLLEFLGFPFKR.

The protein belongs to the universal ribosomal protein uL5 family. Part of the 50S ribosomal subunit; part of the 5S rRNA/L5/L18/L25 subcomplex. Contacts the 5S rRNA and the P site tRNA. Forms a bridge to the 30S subunit in the 70S ribosome.

Functionally, this is one of the proteins that bind and probably mediate the attachment of the 5S RNA into the large ribosomal subunit, where it forms part of the central protuberance. In the 70S ribosome it contacts protein S13 of the 30S subunit (bridge B1b), connecting the 2 subunits; this bridge is implicated in subunit movement. Contacts the P site tRNA; the 5S rRNA and some of its associated proteins might help stabilize positioning of ribosome-bound tRNAs. This chain is Large ribosomal subunit protein uL5, found in Pseudothermotoga lettingae (strain ATCC BAA-301 / DSM 14385 / NBRC 107922 / TMO) (Thermotoga lettingae).